A 695-amino-acid polypeptide reads, in one-letter code: Protein-glutamine gamma-glutamyltransferase 2 (695 aa).

Active-site residues include Cys-272, His-332, and Asp-355. 5 residues coordinate Ca(2+): Asn-395, Asp-397, Glu-434, Glu-444, and Glu-449. Residues 476-482 (SIKHAQP) and 578-581 (ANIP) contribute to the GTP site.

The protein belongs to the transglutaminase superfamily. Transglutaminase family. Monomer. The cofactor is Ca(2+).

The protein resides in the cytoplasm. It localises to the cytosol. The protein localises to the nucleus. Its subcellular location is the chromosome. It is found in the secreted. The protein resides in the extracellular space. It localises to the extracellular matrix. The protein localises to the cell membrane. Its subcellular location is the mitochondrion. The enzyme catalyses L-glutaminyl-[protein] + L-lysyl-[protein] = [protein]-L-lysyl-N(6)-5-L-glutamyl-[protein] + NH4(+). The catalysed reaction is L-glutaminyl-[protein] + serotonin = 5-serotonyl-L-glutamyl-[protein] + NH4(+). It catalyses the reaction L-glutaminyl-[protein] + dopamine = 5-dopaminyl-L-glutamyl-[protein] + NH4(+). It carries out the reaction L-glutaminyl-[protein] + histamine = 5-histaminyl-L-glutamyl-[protein] + NH4(+). The enzyme catalyses L-glutaminyl-[protein] + (R)-noradrenaline = 5-(R)-noradrenalinyl-L-glutamyl-[protein] + NH4(+). The catalysed reaction is L-glutaminyl-[protein] + H2O = L-glutamyl-[protein] + NH4(+). Acyltransferase activity is regulated by the binding of GTP and Ca(2+): inactivated by GTP, which stabilizes its closed structure, thereby obstructing the accessibility of substrates to the active sites. In contrast, Ca(2+) acts as a cofactor by inducing conformational change to the active open form. In absence of Ca(2+), Mg(2+) may bind Ca(2+)-binding sites, promoting GTP-binding and subsequent inhibition of the acyltransferase activity. Calcium-dependent acyltransferase that catalyzes the formation of covalent bonds between peptide-bound glutamine and various primary amines, such as gamma-amino group of peptide-bound lysine, or mono- and polyamines, thereby producing cross-linked or aminated proteins, respectively. Involved in many biological processes, such as bone development, angiogenesis, wound healing, cellular differentiation, chromatin modification and apoptosis. Acts as a protein-glutamine gamma-glutamyltransferase by mediating the cross-linking of proteins: under physiological conditions, the protein cross-linking activity is inhibited by GTP; inhibition is relieved by Ca(2+) in response to various stresses. When secreted, catalyzes cross-linking of proteins of the extracellular matrix, resulting in the formation of scaffolds. Plays a key role during apoptosis, both by (1) promoting the cross-linking of cytoskeletal proteins resulting in condensation of the cytoplasm, and by (2) mediating cross-linking proteins of the extracellular matrix, resulting in the irreversible formation of scaffolds that stabilize the integrity of the dying cells before their clearance by phagocytosis, thereby preventing the leakage of harmful intracellular components. In addition to protein cross-linking, can use different monoamine substrates to catalyze a vast array of protein post-translational modifications: mediates aminylation of serotonin, dopamine, noradrenaline or histamine into glutamine residues of target proteins to generate protein serotonylation, dopaminylation, noradrenalinylation or histaminylation, respectively. Mediates protein serotonylation of small GTPases during activation and aggregation of platelets, leading to constitutive activation of these GTPases. Plays a key role in chromatin organization by mediating serotonylation and dopaminylation of histone H3. Catalyzes serotonylation of 'Gln-5' of histone H3 (H3Q5ser) during serotonergic neuron differentiation, thereby facilitating transcription. Acts as a mediator of neurotransmission-independent role of nuclear dopamine in ventral tegmental area (VTA) neurons: catalyzes dopaminylation of 'Gln-5' of histone H3 (H3Q5dop), thereby regulating relapse-related transcriptional plasticity in the reward system. Also acts as a protein deamidase by mediating the side chain deamidation of specific glutamine residues of proteins to glutamate. May also act as an isopeptidase cleaving the previously formed cross-links. Also able to participate in signaling pathways independently of its acyltransferase activity: acts as a signal transducer in alpha-1 adrenergic receptor-mediated stimulation of phospholipase C-delta (PLCD) activity and is required for coupling alpha-1 adrenergic agonists to the stimulation of phosphoinositide lipid metabolism. This is Protein-glutamine gamma-glutamyltransferase 2 from Pagrus major (Red sea bream).